Reading from the N-terminus, the 160-residue chain is 6,7-dimethyl-8-ribityllumazine synthase (160 aa).

5-amino-6-(D-ribitylamino)uracil contacts are provided by residues F28, 62-64 (ALE), and 86-88 (AVI). 91-92 (ET) lines the (2S)-2-hydroxy-3-oxobutyl phosphate pocket. Catalysis depends on H94, which acts as the Proton donor. N119 lines the 5-amino-6-(D-ribitylamino)uracil pocket. A (2S)-2-hydroxy-3-oxobutyl phosphate-binding site is contributed by R133.

This sequence belongs to the DMRL synthase family.

It catalyses the reaction (2S)-2-hydroxy-3-oxobutyl phosphate + 5-amino-6-(D-ribitylamino)uracil = 6,7-dimethyl-8-(1-D-ribityl)lumazine + phosphate + 2 H2O + H(+). It functions in the pathway cofactor biosynthesis; riboflavin biosynthesis; riboflavin from 2-hydroxy-3-oxobutyl phosphate and 5-amino-6-(D-ribitylamino)uracil: step 1/2. Catalyzes the formation of 6,7-dimethyl-8-ribityllumazine by condensation of 5-amino-6-(D-ribitylamino)uracil with 3,4-dihydroxy-2-butanone 4-phosphate. This is the penultimate step in the biosynthesis of riboflavin. This chain is 6,7-dimethyl-8-ribityllumazine synthase, found in Nitrosospira multiformis (strain ATCC 25196 / NCIMB 11849 / C 71).